The sequence spans 352 residues: Protein RecA (352 aa).

68-75 (GPESSGKT) is an ATP binding site.

This sequence belongs to the RecA family.

It is found in the cytoplasm. Its function is as follows. Can catalyze the hydrolysis of ATP in the presence of single-stranded DNA, the ATP-dependent uptake of single-stranded DNA by duplex DNA, and the ATP-dependent hybridization of homologous single-stranded DNAs. It interacts with LexA causing its activation and leading to its autocatalytic cleavage. The sequence is that of Protein RecA from Clostridium perfringens (strain SM101 / Type A).